The chain runs to 489 residues: Palmitoyltransferase ZDHHC14 (489 aa).

At 1–60 the chain is on the cytoplasmic side; sequence MPPGGGGPMKDCEYSQISTHSSSPMESPHKKKKIAARRKWEVFPGRNKFFCNGRIMMARQ. Residues 61–81 form a helical membrane-spanning segment; that stretch reads TGVFYLTLILILVTSGLFFAF. Topologically, residues 82-89 are lumenal; it reads DCRYLAEK. A helical transmembrane segment spans residues 90-110; that stretch reads ITPAIPVVGGILFFFVMGTLL. The Cytoplasmic portion of the chain corresponds to 111-208; it reads RTSFSDPGVL…GNCVGKRNYR (98 aa). A DHHC domain is found at 165-215; it reads KYCFTCKIFRPPRASHCSLCDNCVEQFDHHCPWVGNCVGKRNYRFFYMFIL. Catalysis depends on cysteine 195, which acts as the S-palmitoyl cysteine intermediate. Residues 209–229 form a helical membrane-spanning segment; it reads FFYMFILSLSFLTVFIFAFVI. The Lumenal segment spans residues 230 to 255; the sequence is THVIHRSQQKGFLDALKDSPASVLEA. A helical membrane pass occupies residues 256–276; sequence VICFFSVWSIIGLSGFHTYLI. The Cytoplasmic segment spans residues 277–489; it reads SSNQTTNEDI…VRGLVKLSSV (213 aa). The segment at 434–454 is disordered; that stretch reads HGGHQFLTPDEAPSPPRMLGA. Serine 456 carries the post-translational modification Phosphoserine.

The protein belongs to the DHHC palmitoyltransferase family. ERF2/ZDHHC9 subfamily.

The protein localises to the endoplasmic reticulum membrane. It localises to the golgi apparatus membrane. The enzyme catalyses L-cysteinyl-[protein] + hexadecanoyl-CoA = S-hexadecanoyl-L-cysteinyl-[protein] + CoA. Palmitoyltransferase that could catalyze the addition of palmitate onto various protein substrates. May have a palmitoyltransferase activity toward the beta-2 adrenergic receptor/ADRB2 and thereby regulate G protein-coupled receptor signaling. May play a role in cell differentiation and apoptosis. The chain is Palmitoyltransferase ZDHHC14 from Mus musculus (Mouse).